Consider the following 478-residue polypeptide: Glutamate--tRNA ligase (478 aa).

The 'HIGH' region motif lies at 8–18; the sequence is PSPTGYLHLGN. The 'KMSKS' region signature appears at 248–252; that stretch reads KLSKR. K251 contacts ATP.

It belongs to the class-I aminoacyl-tRNA synthetase family. Glutamate--tRNA ligase type 1 subfamily. Monomer.

It localises to the cytoplasm. The catalysed reaction is tRNA(Glu) + L-glutamate + ATP = L-glutamyl-tRNA(Glu) + AMP + diphosphate. Its function is as follows. Catalyzes the attachment of glutamate to tRNA(Glu) in a two-step reaction: glutamate is first activated by ATP to form Glu-AMP and then transferred to the acceptor end of tRNA(Glu). This Sulfurihydrogenibium sp. (strain YO3AOP1) protein is Glutamate--tRNA ligase.